A 394-amino-acid chain; its full sequence is Elongation factor Tu 1 (394 aa).

The region spanning 10-204 (KPHVNVGTIG…ALDNYIPEPE (195 aa)) is the tr-type G domain. Positions 19-26 (GHVDHGKT) are G1. 19–26 (GHVDHGKT) is a binding site for GTP. Residue Thr-26 coordinates Mg(2+). A G2 region spans residues 60–64 (GITIS). Residues 81–84 (DCPG) form a G3 region. Residues 81 to 85 (DCPGH) and 136 to 139 (NKCD) contribute to the GTP site. Residues 136–139 (NKCD) are G4. Positions 174–176 (SAL) are G5.

It belongs to the TRAFAC class translation factor GTPase superfamily. Classic translation factor GTPase family. EF-Tu/EF-1A subfamily. Monomer.

It localises to the cytoplasm. The enzyme catalyses GTP + H2O = GDP + phosphate + H(+). GTP hydrolase that promotes the GTP-dependent binding of aminoacyl-tRNA to the A-site of ribosomes during protein biosynthesis. The protein is Elongation factor Tu 1 of Photobacterium profundum (strain SS9).